The primary structure comprises 110 residues: Insulin (110 aa).

An N-terminal signal peptide occupies residues 1–24 (MALWMRLLPLLVLLALWGPDPASA). 3 disulfides stabilise this stretch: Cys31/Cys96, Cys43/Cys109, and Cys95/Cys100. The propeptide at 57 to 87 (EAEDLQVGQVELGGGPGAGSLQPLALEGSLQ) is c peptide.

Belongs to the insulin family. In terms of assembly, heterodimer of a B chain and an A chain linked by two disulfide bonds.

Its subcellular location is the secreted. Insulin decreases blood glucose concentration. It increases cell permeability to monosaccharides, amino acids and fatty acids. It accelerates glycolysis, the pentose phosphate cycle, and glycogen synthesis in liver. This chain is Insulin (INS), found in Pan troglodytes (Chimpanzee).